The following is a 730-amino-acid chain: MPALGCCVDAAVSPPPGYSFLWDSSLPAPEIFPSGVPLSTNTAATTTTTTHWSPAHSSALYSIDGWGAPYFTVNSSGDISVKPHGTETLPHQEIDLLKVVKKASDPKNSGGLGLQFPLVVRFPDILKNRLESLQSAFDYAVQSQGYEAHYQGVYPVKCNQDRFVVEDIVKFGSGFRFGLEAGSKPELLLAMSCLCKGSREGLLVCNGFKDADYISLALVARKLMLNTVIVLEQEEELDLVIDISRKMAVRPLIGLRAKLRTKHSGHFGSTSGEKGKFGLTTTQIVRVVKKLEESGMLDCLQLLHFHIGSQIPSTALLADGVGEAAQIYCELVRLGAGMKYIDCGGGLGIDYDGTKSCDSDCSVGYGLQEYASTVVQAVRFVCDRKNVKHPVICSESGRAIVSHHSVLIFEAVSSTTTRSQELSSVDLQSFVEKLNDDARADYRNLSAAAIRGEYDTCVLYADQLKQRCVEQFKDGNLDIEQLAAVDGICDFVSKAIGASDPVRTYHVNLSIFTSIPDFWAIDQLFPIVPIHKLDERPGVRGILSDLTCDSDGKIDKFIGGESSLPLHELGSNGGGDGGKYYLGMFLGGAYEEALGGLHNLFGGPSVLRVSQSDSPHSFAVTCAVPGPSCADVLRAMQHEPELMFETLKHRAEEFVHNDDEQEEDKGLAFASLASSLAQSFNNMPYLVTNSSCCLTATNNGGYYYCNDENIVGVGAESAAAEEELWPYCVA.

The transit peptide at 1-37 (MPALGCCVDAAVSPPPGYSFLWDSSLPAPEIFPSGVP) directs the protein to the chloroplast. Lysine 157 carries the post-translational modification N6-(pyridoxal phosphate)lysine. Pyridoxal 5'-phosphate contacts are provided by residues serine 309, glycine 346, and 395-398 (ESGR). 460–461 (YA) provides a ligand contact to substrate. The active-site Proton donor; shared with dimeric partner is cysteine 548. Aspartate 549 lines the substrate pocket. Residue tyrosine 590 coordinates pyridoxal 5'-phosphate.

The protein belongs to the Orn/Lys/Arg decarboxylase class-II family. SpeA subfamily. Mg(2+) is required as a cofactor. Requires pyridoxal 5'-phosphate as cofactor.

The protein localises to the plastid. It is found in the chloroplast. The enzyme catalyses L-arginine + H(+) = agmatine + CO2. It participates in alkaloid biosynthesis; nicotine biosynthesis. Its pathway is amine and polyamine biosynthesis; agmatine biosynthesis; agmatine from L-arginine: step 1/1. Its function is as follows. Involved in the biosynthesis of pyridine alkaloid natural products, leading mainly to the production of anabasine, anatabine, nicotine and nornicotine, effective deterrents against herbivores with antiparasitic and pesticide properties (neurotoxins); nornicotine serves as the precursor in the synthesis of the carcinogen compound N'-nitrosonornicotine (NNN). Required for the biosynthesis of putrescine. Catalyzes the first step of polyamine (PA) biosynthesis to produce putrescine from arginine. The sequence is that of Arginine decarboxylase 1B, chloroplastic from Nicotiana tabacum (Common tobacco).